Here is a 410-residue protein sequence, read N- to C-terminus: Peptidase T (410 aa).

H79 provides a ligand contact to Zn(2+). D81 is a catalytic residue. Residue D142 participates in Zn(2+) binding. Catalysis depends on E176, which acts as the Proton acceptor. Zn(2+) contacts are provided by E177, D199, and H381.

The protein belongs to the peptidase M20B family. Zn(2+) serves as cofactor.

Its subcellular location is the cytoplasm. It carries out the reaction Release of the N-terminal residue from a tripeptide.. Functionally, cleaves the N-terminal amino acid of tripeptides. The sequence is that of Peptidase T from Bacillus licheniformis (strain ATCC 14580 / DSM 13 / JCM 2505 / CCUG 7422 / NBRC 12200 / NCIMB 9375 / NCTC 10341 / NRRL NRS-1264 / Gibson 46).